A 189-amino-acid polypeptide reads, in one-letter code: uncharacterized protein (189 aa).

A compositionally biased stretch (basic and acidic residues) spans 1–15 (MDKHGVKTPLWRKEV). Residues 1–77 (MDKHGVKTPL…SPLRQESSSQ (77 aa)) are disordered. Composition is skewed to acidic residues over residues 16-29 (EDPEAREEDLEDDS) and 46-56 (SATETEEDSRD). Over residues 65-77 (VSYSPLRQESSSQ) the composition is skewed to polar residues.

This is an uncharacterized protein from Mus musculus (Mouse).